Consider the following 615-residue polypeptide: 1-deoxy-D-xylulose-5-phosphate synthase (615 aa).

Residues H77 and 118 to 120 (GHS) contribute to the thiamine diphosphate site. A Mg(2+)-binding site is contributed by D149. Thiamine diphosphate-binding positions include 150–151 (GA), N178, Y286, and E367. N178 is a binding site for Mg(2+).

The protein belongs to the transketolase family. DXPS subfamily. Homodimer. Mg(2+) serves as cofactor. The cofactor is thiamine diphosphate.

The enzyme catalyses D-glyceraldehyde 3-phosphate + pyruvate + H(+) = 1-deoxy-D-xylulose 5-phosphate + CO2. It participates in metabolic intermediate biosynthesis; 1-deoxy-D-xylulose 5-phosphate biosynthesis; 1-deoxy-D-xylulose 5-phosphate from D-glyceraldehyde 3-phosphate and pyruvate: step 1/1. Functionally, catalyzes the acyloin condensation reaction between C atoms 2 and 3 of pyruvate and glyceraldehyde 3-phosphate to yield 1-deoxy-D-xylulose-5-phosphate (DXP). This Glaesserella parasuis serovar 5 (strain SH0165) (Haemophilus parasuis) protein is 1-deoxy-D-xylulose-5-phosphate synthase.